The following is a 96-amino-acid chain: Small ribosomal subunit protein bS18c (96 aa).

The protein belongs to the bacterial ribosomal protein bS18 family. In terms of assembly, part of the 30S ribosomal subunit.

The protein resides in the plastid. It localises to the chloroplast. This Pinus thunbergii (Japanese black pine) protein is Small ribosomal subunit protein bS18c (rps18).